A 95-amino-acid polypeptide reads, in one-letter code: Large ribosomal subunit protein bL27 (95 aa).

The propeptide occupies 1–9; it reads MLKMNLQFF.

Belongs to the bacterial ribosomal protein bL27 family. Post-translationally, the N-terminus is cleaved by ribosomal processing cysteine protease Prp.

In Lachnoclostridium phytofermentans (strain ATCC 700394 / DSM 18823 / ISDg) (Clostridium phytofermentans), this protein is Large ribosomal subunit protein bL27.